The primary structure comprises 79 residues: Small ribosomal subunit protein bS18c (79 aa).

This sequence belongs to the bacterial ribosomal protein bS18 family. As to quaternary structure, part of the 30S ribosomal subunit.

It localises to the plastid. Its subcellular location is the chloroplast. In Chaetosphaeridium globosum (Charophycean green alga), this protein is Small ribosomal subunit protein bS18c.